The following is a 94-amino-acid chain: DNA-directed RNA polymerase subunit omega (94 aa).

Belongs to the RNA polymerase subunit omega family. As to quaternary structure, the RNAP catalytic core consists of 2 alpha, 1 beta, 1 beta' and 1 omega subunit. When a sigma factor is associated with the core the holoenzyme is formed, which can initiate transcription.

The catalysed reaction is RNA(n) + a ribonucleoside 5'-triphosphate = RNA(n+1) + diphosphate. In terms of biological role, promotes RNA polymerase assembly. Latches the N- and C-terminal regions of the beta' subunit thereby facilitating its interaction with the beta and alpha subunits. This is DNA-directed RNA polymerase subunit omega from Parafrankia sp. (strain EAN1pec).